We begin with the raw amino-acid sequence, 865 residues long: V-type proton ATPase 116 kDa subunit a 3 (865 aa).

At 1-409 (MGSIYRSEHM…VNPAPWTIIS (409 aa)) the chain is on the cytoplasmic side. Positions 51–121 (FVNEVRRCDE…NKNCKVLKNN (71 aa)) form a coiled coil. The chain crosses the membrane as a helical span at residues 410–430 (FPFLFAVMFGDAGHGIIMLIA). Topologically, residues 431-453 (ASAFVIFEKKLISMKIKDEIFNT) are extracellular. A helical membrane pass occupies residues 454 to 474 (FFGGRYVVLLMGMFAIYTGFI). Topologically, residues 475-556 (YNDFYSKSVN…FLNPMKMKTS (82 aa)) are cytoplasmic. Residues 557-577 (ILLGISQMAFGIMLSLMNHIG) form a helical membrane-spanning segment. N-linked (GlcNAc...) asparagine glycosylation occurs at Asn578. The Extracellular segment spans residues 578-583 (NRSVVD). Residues 584 to 604 (IVFVFIPQCLFLGCIFVYLCL) form a helical membrane-spanning segment. Over 605-623 (QVLMKWIFFYVKPAYIFGR) the chain is Cytoplasmic. Residues 624–644 (LYPGSNCAPSLLIGLINMFMV) traverse the membrane as a helical segment. At 645-688 (KSRDASFAHDVGTAAGKEWVIVNGQNVTYTINDQCYLQQWYPNQ) the chain is on the extracellular side. N-linked (GlcNAc...) asparagine glycosylation is found at Asn670 and Asn687. A helical membrane pass occupies residues 689 to 709 (SLVELILLLIAVVSVPVMLLV). Over 710 to 798 (KPFYIRWRHS…LTMGGWGGSA (89 aa)) the chain is Cytoplasmic. A helical transmembrane segment spans residues 799–819 (AITILFYFIFSILSVCILILM). At 820–865 (EGLSAFLHAIRLHWVEFQSKFYGGTGIQFEPFCFTKIIRVYEGLDQ) the chain is on the extracellular side.

The protein belongs to the V-ATPase 116 kDa subunit family. V-ATPase is a heteromultimeric enzyme made up of two complexes: the ATP-hydrolytic V1 complex and the proton translocation V0 complex. The V1 complex consists of three catalytic AB heterodimers that form a heterohexamer, three peripheral stalks each consisting of EG heterodimers, one central rotor including subunits D and F, and the regulatory subunits C and H. The proton translocation complex V0 consists of the proton transport subunit a, a ring of proteolipid subunits c9c'', rotary subunit d, subunits e and f, and the accessory subunits vah-19/Ac45 and vah-20/PRR. Interacts with V-type proton ATPase subunit C vha-11.

It is found in the apical cell membrane. Functionally, subunit of the V0 complex of vacuolar(H+)-ATPase (V-ATPase), a multisubunit enzyme composed of a peripheral complex (V1) that hydrolyzes ATP and a membrane integral complex (V0) that translocates protons. V-ATPase is responsible for acidifying and maintaining the pH of intracellular compartments and in some cell types, is targeted to the plasma membrane, where it is responsible for acidifying the extracellular environment. In the intestine, required for the rhythmic defecation behavior by promoting acidification in the gut lumen following defecation. Also, luminal acidification is required for nutrient uptake. The chain is V-type proton ATPase 116 kDa subunit a 3 from Caenorhabditis elegans.